Consider the following 63-residue polypeptide: Small ribosomal subunit protein eS30 (63 aa).

The interval 1 to 33 (MGKVHGSLARAGKVKSQTPKVEKQEKPKKPQGR) is disordered.

It belongs to the eukaryotic ribosomal protein eS30 family. Component of the small ribosomal subunit. Mature ribosomes consist of a small (40S) and a large (60S) subunit. The 40S subunit contains about 32 different proteins and 1 molecule of RNA (18S). The 60S subunit contains 45 different proteins and 3 molecules of RNA (25S, 5.8S and 5S).

Its subcellular location is the cytoplasm. Its function is as follows. Component of the ribosome, a large ribonucleoprotein complex responsible for the synthesis of proteins in the cell. The small ribosomal subunit (SSU) binds messenger RNAs (mRNAs) and translates the encoded message by selecting cognate aminoacyl-transfer RNA (tRNA) molecules. The large subunit (LSU) contains the ribosomal catalytic site termed the peptidyl transferase center (PTC), which catalyzes the formation of peptide bonds, thereby polymerizing the amino acids delivered by tRNAs into a polypeptide chain. The nascent polypeptides leave the ribosome through a tunnel in the LSU and interact with protein factors that function in enzymatic processing, targeting, and the membrane insertion of nascent chains at the exit of the ribosomal tunnel. The sequence is that of Small ribosomal subunit protein eS30 (RPS30) from Candida albicans (strain SC5314 / ATCC MYA-2876) (Yeast).